The chain runs to 365 residues: NAD(P)H-quinone oxidoreductase subunit 1, chloroplastic (365 aa).

6 helical membrane-spanning segments follow: residues Leu-30–Leu-50, Ile-104–Leu-124, Ile-129–Gly-149, Phe-253–Val-273, Val-302–Ile-322, and Leu-338–Thr-358.

The protein belongs to the complex I subunit 1 family. NDH is composed of at least 16 different subunits, 5 of which are encoded in the nucleus.

It is found in the plastid. The protein resides in the chloroplast thylakoid membrane. It catalyses the reaction a plastoquinone + NADH + (n+1) H(+)(in) = a plastoquinol + NAD(+) + n H(+)(out). It carries out the reaction a plastoquinone + NADPH + (n+1) H(+)(in) = a plastoquinol + NADP(+) + n H(+)(out). NDH shuttles electrons from NAD(P)H:plastoquinone, via FMN and iron-sulfur (Fe-S) centers, to quinones in the photosynthetic chain and possibly in a chloroplast respiratory chain. The immediate electron acceptor for the enzyme in this species is believed to be plastoquinone. Couples the redox reaction to proton translocation, and thus conserves the redox energy in a proton gradient. The sequence is that of NAD(P)H-quinone oxidoreductase subunit 1, chloroplastic from Populus trichocarpa (Western balsam poplar).